The following is a 319-amino-acid chain: tRNA uridine(34) hydroxylase (319 aa).

The region spanning 127–221 (KQEDTVIIDA…YGKDPEVQGE (95 aa)) is the Rhodanese domain. The active-site Cysteine persulfide intermediate is Cys-181.

This sequence belongs to the TrhO family.

It carries out the reaction uridine(34) in tRNA + AH2 + O2 = 5-hydroxyuridine(34) in tRNA + A + H2O. In terms of biological role, catalyzes oxygen-dependent 5-hydroxyuridine (ho5U) modification at position 34 in tRNAs. This is tRNA uridine(34) hydroxylase from Bacillus cereus (strain ATCC 10987 / NRS 248).